We begin with the raw amino-acid sequence, 373 residues long: GTP cyclohydrolase 1 type 2 homolog (373 aa).

A divalent metal cation is bound by residues His68, His69, Asp107, His333, and Glu336.

Belongs to the GTP cyclohydrolase I type 2/NIF3 family. In terms of assembly, homohexamer.

This Bacillus subtilis (strain 168) protein is GTP cyclohydrolase 1 type 2 homolog (yqfO).